Here is a 264-residue protein sequence, read N- to C-terminus: 3-methyl-2-oxobutanoate hydroxymethyltransferase (264 aa).

Mg(2+)-binding residues include Asp45 and Asp84. Residues 45–46 (DS), Asp84, and Lys112 each bind 3-methyl-2-oxobutanoate. Mg(2+) is bound at residue Glu114. Glu181 functions as the Proton acceptor in the catalytic mechanism.

This sequence belongs to the PanB family. As to quaternary structure, homodecamer; pentamer of dimers. It depends on Mg(2+) as a cofactor.

It is found in the cytoplasm. It catalyses the reaction 3-methyl-2-oxobutanoate + (6R)-5,10-methylene-5,6,7,8-tetrahydrofolate + H2O = 2-dehydropantoate + (6S)-5,6,7,8-tetrahydrofolate. It functions in the pathway cofactor biosynthesis; (R)-pantothenate biosynthesis; (R)-pantoate from 3-methyl-2-oxobutanoate: step 1/2. In terms of biological role, catalyzes the reversible reaction in which hydroxymethyl group from 5,10-methylenetetrahydrofolate is transferred onto alpha-ketoisovalerate to form ketopantoate. The protein is 3-methyl-2-oxobutanoate hydroxymethyltransferase of Cronobacter sakazakii (strain ATCC BAA-894) (Enterobacter sakazakii).